The sequence spans 197 residues: Ribonuclease HII (197 aa).

Residues 9–197 form the RNase H type-2 domain; the sequence is KLIAGVDEVG…APVKKALEQF (189 aa). D15, E16, and D107 together coordinate a divalent metal cation.

This sequence belongs to the RNase HII family. Mn(2+) serves as cofactor. It depends on Mg(2+) as a cofactor.

The protein resides in the cytoplasm. It carries out the reaction Endonucleolytic cleavage to 5'-phosphomonoester.. Functionally, endonuclease that specifically degrades the RNA of RNA-DNA hybrids. The protein is Ribonuclease HII of Haemophilus influenzae (strain PittEE).